Reading from the N-terminus, the 156-residue chain is Neuroactive polyprotein R15 (156 aa).

The signal sequence occupies residues Met1–Leu26. Positions Pro27–Ser48 are excised as a propeptide. Cys74 and Cys81 are disulfide-bonded. Pyrrolidone carboxylic acid is present on Gln120.

As to expression, expressed within the abdominal ganglion in neurons R15, RB(HE), the two L9(G) gill motoneurons, and L40 interneuron, all are parts of autonomic control circuit that contributes to implementing a central command to coordinate autonomic activity with escape locomotion.

The protein localises to the secreted. The alpha-1 peptide acts as an osmoregulatory peptide, increasing blood volume, and also modulates the activity of a set of cardiac motor neurons that control heart rate. The protein is Neuroactive polyprotein R15 of Aplysia californica (California sea hare).